Reading from the N-terminus, the 156-residue chain is Large ribosomal subunit protein eL29 (156 aa).

Over residues 1–26 (MAKSKNHTTHNQSRKWHRNGIKKPRS) the composition is skewed to basic residues. Disordered regions lie at residues 1-35 (MAKSKNHTTHNQSRKWHRNGIKKPRSQRYESLKGV) and 116-156 (RRLC…VKAP). Residue Lys5 is modified to N6-methyllysine. Ser31 bears the Phosphoserine mark. N6-acetyllysine is present on Lys33. A run of 2 repeats spans residues 129–136 (AEAKAPAK) and 137–144 (AQAKAPAQ). Residues 129-144 (AEAKAPAKAQAKAPAQ) are 2 X 8 AA tandem repeats of A-X-A-K-A-P-A-[KQ]. The segment covering 134–156 (PAKAQAKAPAQAPKGAQAPVKAP) has biased composition (low complexity).

Belongs to the eukaryotic ribosomal protein eL29 family. As to quaternary structure, component of the large ribosomal subunit.

It is found in the cytoplasm. Its function is as follows. Component of the large ribosomal subunit. The ribosome is a large ribonucleoprotein complex responsible for the synthesis of proteins in the cell. This chain is Large ribosomal subunit protein eL29 (Rpl29), found in Rattus norvegicus (Rat).